The primary structure comprises 193 residues: Glycerol-3-phosphate acyltransferase (193 aa).

The next 4 helical transmembrane spans lie at 2-22, 76-96, 112-132, and 152-172; these read LIAL…GLIV, VPIH…FPVF, LLFY…VFLF, and CLFV…AFVI.

It belongs to the PlsY family. In terms of assembly, probably interacts with PlsX.

It localises to the cell membrane. It catalyses the reaction an acyl phosphate + sn-glycerol 3-phosphate = a 1-acyl-sn-glycero-3-phosphate + phosphate. It functions in the pathway lipid metabolism; phospholipid metabolism. In terms of biological role, catalyzes the transfer of an acyl group from acyl-phosphate (acyl-PO(4)) to glycerol-3-phosphate (G3P) to form lysophosphatidic acid (LPA). This enzyme utilizes acyl-phosphate as fatty acyl donor, but not acyl-CoA or acyl-ACP. This is Glycerol-3-phosphate acyltransferase from Bacillus velezensis (strain DSM 23117 / BGSC 10A6 / LMG 26770 / FZB42) (Bacillus amyloliquefaciens subsp. plantarum).